Consider the following 313-residue polypeptide: GTP cyclohydrolase 1 (313 aa).

The span at Met1–Ser10 shows a compositional bias: basic and acidic residues. The segment at Met1–Glu120 is disordered. The segment covering Asp11–Pro20 has biased composition (low complexity). Residues Lys29–His39 show a composition bias toward basic residues. Residues Ser40–Ser64 show a composition bias toward basic and acidic residues. Residues Thr72–Ile102 show a composition bias toward low complexity. Zn(2+)-binding residues include Cys202, His205, and Cys273.

Belongs to the GTP cyclohydrolase I family. Toroid-shaped homodecamer, composed of two pentamers of five dimers.

The catalysed reaction is GTP + H2O = 7,8-dihydroneopterin 3'-triphosphate + formate + H(+). It functions in the pathway cofactor biosynthesis; 7,8-dihydroneopterin triphosphate biosynthesis; 7,8-dihydroneopterin triphosphate from GTP: step 1/1. With respect to regulation, GTP shows a positive allosteric effect, and tetrahydrobiopterin inhibits the enzyme activity. GTP cyclohydrolase 1 is the first enzyme in the biosynthetic pathway leading to folic acid. The polypeptide is GTP cyclohydrolase 1 (gch-1) (Neurospora crassa (strain ATCC 24698 / 74-OR23-1A / CBS 708.71 / DSM 1257 / FGSC 987)).